Here is a 137-residue protein sequence, read N- to C-terminus: MMQPKKTKFRKAHKGRIHGVASSGATLSFGQFGLKAMAPERITARQIEAARRALTRHMKRVGRVWIRVFPDVPVSKKPAEVRMGSGKGSPELWVVRVKPGRILFEIDGVNDQIAREALTLAAAKLPIKTRFVARIAE.

The protein belongs to the universal ribosomal protein uL16 family. As to quaternary structure, part of the 50S ribosomal subunit.

Binds 23S rRNA and is also seen to make contacts with the A and possibly P site tRNAs. This Afipia carboxidovorans (strain ATCC 49405 / DSM 1227 / KCTC 32145 / OM5) (Oligotropha carboxidovorans) protein is Large ribosomal subunit protein uL16.